Reading from the N-terminus, the 921-residue chain is Protein translocase subunit SecA (921 aa).

Residues Gln-87, 105 to 109 (GEGKT), and Asp-501 contribute to the ATP site. The tract at residues 831-886 (PFPVINTETSGPSEEPAGLFSQGTTGGDIPAPQPMAGFPSAAPMPPRPQPVPTGAE) is disordered. Residues 872-881 (APMPPRPQPV) show a composition bias toward pro residues. 4 residues coordinate Zn(2+): Cys-905, Cys-907, Cys-916, and His-917.

It belongs to the SecA family. As to quaternary structure, monomer and homodimer. Part of the essential Sec protein translocation apparatus which comprises SecA, SecYEG and auxiliary proteins SecDF-YajC and YidC. The cofactor is Zn(2+).

It localises to the cell inner membrane. The protein localises to the cytoplasm. The catalysed reaction is ATP + H2O + cellular proteinSide 1 = ADP + phosphate + cellular proteinSide 2.. Functionally, part of the Sec protein translocase complex. Interacts with the SecYEG preprotein conducting channel. Has a central role in coupling the hydrolysis of ATP to the transfer of proteins into and across the cell membrane, serving both as a receptor for the preprotein-SecB complex and as an ATP-driven molecular motor driving the stepwise translocation of polypeptide chains across the membrane. The polypeptide is Protein translocase subunit SecA (Gluconobacter oxydans (strain 621H) (Gluconobacter suboxydans)).